The primary structure comprises 2511 residues: Chromodomain-helicase-DNA-binding protein 8 (2511 aa).

Positions 484–615 are disordered; it reads PRVLNQDELP…RSNRQVKRKK (132 aa). A compositionally biased stretch (gly residues) spans 515–524; it reads GGGVGGGGGG. The segment covering 604-615 has biased composition (basic residues); it reads KRRSNRQVKRKK. Chromo domains lie at 680 to 745 and 760 to 826; these read AIVD…AQMR and VEVD…RTPR. The Helicase ATP-binding domain maps to 859–1033; it reads LFNWYNRQNC…FSLLHFLEPA (175 aa). 872–879 provides a ligand contact to ATP; that stretch reads DEMGLGKT. Positions 984 to 987 match the DEAH box motif; sequence DEAH. Residues 1174-1330 form the Helicase C-terminal domain; it reads LLDKLLPRLK…SMSGNKESSI (157 aa). Disordered stretches follow at residues 1440-1482, 1715-1736, 2086-2168, and 2468-2511; these read TRQF…HSGG, EQQAADPELGEGGDYDKYSEDP, SKNN…LTDP, and PSAL…SSED. Over residues 1452–1461 the composition is skewed to acidic residues; that stretch reads DLSDLDSDDD. Residues 2111–2125 show a composition bias toward low complexity; that stretch reads DSGSSSSSRHSGSSD.

Belongs to the SNF2/RAD54 helicase family. CHD8 subfamily. Component of some MLL1/MLL complex.

It is found in the nucleus. It carries out the reaction ATP + H2O = ADP + phosphate + H(+). Functionally, ATP-dependent chromatin-remodeling factor, it slides nucleosomes along DNA; nucleosome sliding requires ATP. Acts as a transcription repressor by remodeling chromatin structure and recruiting histone H1 to target genes. Suppresses p53/tp53-mediated apoptosis by recruiting histone H1 and preventing p53/tp53 transactivation activity. Acts as a negative regulator of Wnt signaling pathway by regulating beta-catenin (ctnnb1) activity. Negatively regulates ctnnb1-targeted gene expression by being recruited specifically to the promoter regions of several ctnnb1 responsive genes. May also act as a transcription activator by participating in efficient U6 RNA polymerase III transcription. This chain is Chromodomain-helicase-DNA-binding protein 8, found in Danio rerio (Zebrafish).